The chain runs to 122 residues: Large ribosomal subunit protein uL14c (122 aa).

It belongs to the universal ribosomal protein uL14 family. As to quaternary structure, part of the 50S ribosomal subunit.

The protein localises to the plastid. Its subcellular location is the chloroplast. In terms of biological role, binds to 23S rRNA. The protein is Large ribosomal subunit protein uL14c of Pleurastrum terricola (Filamentous green alga).